The primary structure comprises 244 residues: Carboxy-S-adenosyl-L-methionine synthase (244 aa).

S-adenosyl-L-methionine is bound by residues Tyr41, 66-68 (GCS), 91-92 (DN), 119-120 (DI), Asn134, and Arg201.

The protein belongs to the class I-like SAM-binding methyltransferase superfamily. Cx-SAM synthase family. Homodimer.

The catalysed reaction is prephenate + S-adenosyl-L-methionine = carboxy-S-adenosyl-L-methionine + 3-phenylpyruvate + H2O. Functionally, catalyzes the conversion of S-adenosyl-L-methionine (SAM) to carboxy-S-adenosyl-L-methionine (Cx-SAM). This Photobacterium profundum (strain SS9) protein is Carboxy-S-adenosyl-L-methionine synthase.